A 327-amino-acid polypeptide reads, in one-letter code: GrpE protein homolog 2, mitochondrial (327 aa).

A mitochondrion-targeting transit peptide spans Met-1–His-39. Positions Ser-68–Ser-140 are disordered. 2 stretches are compositionally biased toward basic and acidic residues: residues Ser-75–Thr-93 and Ser-103–Ala-113. Positions Ser-130–Ser-140 are enriched in acidic residues.

Belongs to the GrpE family. In terms of assembly, probable component of the PAM complex, at least composed of SSC1 (mtHsp70), MGE1, TIM44, PAM16/TIM16, PAM17 and PAM18/TIM14. Interacts with SSQ1.

It is found in the mitochondrion matrix. Its function is as follows. Essential component of the PAM complex, a complex required for the translocation of transit peptide-containing proteins from the inner membrane into the mitochondrial matrix in an ATP-dependent manner. Seems to control the nucleotide-dependent binding of mitochondrial HSP70 to substrate proteins. Binds ATP. Interacts with copper ions Cu(2+). Confers thermotolerance to long-term exposure at moderately high temperature (TMHT at 35 degrees Celsius). In Arabidopsis thaliana (Mouse-ear cress), this protein is GrpE protein homolog 2, mitochondrial.